Here is a 751-residue protein sequence, read N- to C-terminus: MTISPPEREIKTVKIVVDRDPVPTSFEKWAKPGHFSRTLAKGPATTTWVWDLHADAHDFDSHTTDLEDISRKVFSAHFGQLGVIFIWLSGMYFHGARFSNYEAWLSDPTHIKPSAQVVWPIVGQEILNGDVGGGFQGVQITSGFFQLWRGSGITSELQLYSTAIGALICAGLMFFAGWWHYHKAAPKLEWFQNVESMMNHHLAGLLGLGSLAWAGHQIHIALPVNTLLDAGVDPKEIPLPHEFMLNRALMAELYPSFAKGLTPFFTFNWTEYSDFLTFRGGLNPVTGGLWLTDMAHHHLAIAVLFLVAGHQYRTNWGIGHSMKEILEAHKGPFTGEGHKGLYEILTTSWHAQLAINLALMGSLSIIVSHHMYSMPPYPYLATDYGTQLSLFTHHMWIGGFCICGAAAHAAIFMVRDYDPATNYNNVLDRVLRHRDAIISHLNWVCIFLGFHSFGLYIHNDTMSALGRPQDMFSDTAIQLQPIFAQFVQHTHALAPELTAPTAAGSTSASWGGDIVAVGGKIAMMPISLGTSDFMVHHIHAFTIHVTVLILLKGVLFARSSRLIPDKANLGFRFPCDGPGRGGTCQVSAWDHVFLGLFWMYNSISIVIFHFSWKMQSDVWGSVTGNGVSHITGGNFAQSANTINGWLRDFLWAQSSQVIQSYGSALSAYGLIFLGAHFIWAFSLMFLFSGRGYWQELIESIVWAHNKLKVAPAIQPRALSITQGRAVGVAHYLLGGIATTWSFFLARIIAVG.

Transmembrane regions (helical) follow at residues 73-96 (VFSA…FHGA), 159-182 (LYST…WHYH), 198-222 (MNHH…HIAL), 294-312 (MAHH…GHQY), 349-372 (WHAQ…HHMY), 388-414 (LSLF…IFMV), 436-458 (AIIS…LYIH), and 533-551 (FMVH…LILL). 2 residues coordinate [4Fe-4S] cluster: Cys-575 and Cys-584. 2 helical membrane-spanning segments follow: residues 591–612 (HVFL…HFSW) and 665–687 (LSAY…MFLF). His-676 serves as a coordination point for chlorophyll a'. Chlorophyll a is bound by residues Met-684 and Tyr-692. Trp-693 lines the phylloquinone pocket. The helical transmembrane segment at 725 to 745 (AVGVAHYLLGGIATTWSFFLA) threads the bilayer.

The protein belongs to the PsaA/PsaB family. In terms of assembly, the PsaA/B heterodimer binds the P700 chlorophyll special pair and subsequent electron acceptors. PSI consists of a core antenna complex that captures photons, and an electron transfer chain that converts photonic excitation into a charge separation. The eukaryotic PSI reaction center is composed of at least 11 subunits. Requires P700 is a chlorophyll a/chlorophyll a' dimer, A0 is one or more chlorophyll a, A1 is one or both phylloquinones and FX is a shared 4Fe-4S iron-sulfur center. as cofactor.

The protein resides in the plastid. It localises to the chloroplast thylakoid membrane. The enzyme catalyses reduced [plastocyanin] + hnu + oxidized [2Fe-2S]-[ferredoxin] = oxidized [plastocyanin] + reduced [2Fe-2S]-[ferredoxin]. Functionally, psaA and PsaB bind P700, the primary electron donor of photosystem I (PSI), as well as the electron acceptors A0, A1 and FX. PSI is a plastocyanin/cytochrome c6-ferredoxin oxidoreductase, converting photonic excitation into a charge separation, which transfers an electron from the donor P700 chlorophyll pair to the spectroscopically characterized acceptors A0, A1, FX, FA and FB in turn. Oxidized P700 is reduced on the lumenal side of the thylakoid membrane by plastocyanin or cytochrome c6. The chain is Photosystem I P700 chlorophyll a apoprotein A1 from Ostreococcus tauri.